Reading from the N-terminus, the 225-residue chain is Phosphoserine phosphatase (225 aa).

Position 1 is an N-acetylmethionine (methionine 1). Aspartate 20 acts as the Nucleophile in catalysis. Residues aspartate 20 and aspartate 22 each coordinate Mg(2+). 20-22 serves as a coordination point for L-serine; it reads DVD. Catalysis depends on aspartate 22, which acts as the Proton donor. An O-phospho-L-serine-binding site is contributed by methionine 52. Glycine 53 contacts phosphate. Residues 109 to 111 and lysine 158 each bind L-serine; that span reads SGG. O-phospho-L-serine is bound by residues 109–111 and lysine 158; that span reads SGG. Aspartate 179 contributes to the Mg(2+) binding site. Threonine 182 serves as a coordination point for O-phospho-L-serine. Threonine 182 serves as a coordination point for phosphate.

This sequence belongs to the HAD-like hydrolase superfamily. SerB family. Homodimer. Mg(2+) is required as a cofactor.

The protein localises to the cytoplasm. It is found in the cytosol. It carries out the reaction O-phospho-L-serine + H2O = L-serine + phosphate. The enzyme catalyses O-phospho-D-serine + H2O = D-serine + phosphate. Its pathway is amino-acid biosynthesis; L-serine biosynthesis; L-serine from 3-phospho-D-glycerate: step 3/3. Catalyzes the last irreversible step in the biosynthesis of L-serine from carbohydrates, the dephosphorylation of O-phospho-L-serine to L-serine. L-serine can then be used in protein synthesis, to produce other amino acids, in nucleotide metabolism or in glutathione synthesis, or can be racemized to D-serine, a neuromodulator. May also act on O-phospho-D-serine. The sequence is that of Phosphoserine phosphatase from Rattus norvegicus (Rat).